A 745-amino-acid polypeptide reads, in one-letter code: Fatty acid oxidation complex subunit alpha (745 aa).

The enoyl-CoA hydratase stretch occupies residues 47–209 (VNTLKAKFAE…KMGLVDDVVP (163 aa)). The segment at 325 to 745 (RAIHRVGVLG…LDEAAITAHN (421 aa)) is 3-hydroxyacyl-CoA dehydrogenase.

This sequence in the N-terminal section; belongs to the enoyl-CoA hydratase/isomerase family. In the central section; belongs to the 3-hydroxyacyl-CoA dehydrogenase family. Heterotetramer of two alpha chains (FadJ) and two beta chains (FadI).

The protein localises to the cytoplasm. It catalyses the reaction a (3S)-3-hydroxyacyl-CoA = a (2E)-enoyl-CoA + H2O. The catalysed reaction is a 4-saturated-(3S)-3-hydroxyacyl-CoA = a (3E)-enoyl-CoA + H2O. It carries out the reaction a (3S)-3-hydroxyacyl-CoA + NAD(+) = a 3-oxoacyl-CoA + NADH + H(+). The enzyme catalyses (3S)-3-hydroxybutanoyl-CoA = (3R)-3-hydroxybutanoyl-CoA. Its pathway is lipid metabolism; fatty acid beta-oxidation. In terms of biological role, catalyzes the formation of a hydroxyacyl-CoA by addition of water on enoyl-CoA. Also exhibits 3-hydroxyacyl-CoA epimerase and 3-hydroxyacyl-CoA dehydrogenase activities. This Yersinia enterocolitica serotype O:8 / biotype 1B (strain NCTC 13174 / 8081) protein is Fatty acid oxidation complex subunit alpha.